We begin with the raw amino-acid sequence, 342 residues long: MSTAESRNHYKEVPTIEHYSEAIGITNRKKMDWRGWLRKSTLVRSQLIRGCMAEFLAVFVLMVFIEGSAATAIFTNRRQDILFGSISSGLGVAMAVYVAGGVSGAFLNPAVALAFAVLGKLSWKNCIFYMISQYLAAFVASCTMFAYLYEALNNFDGGERQMFGPNGTAHIWSTYPQPFLSPHTAFADQVFCTAILLIVVLAMCDSKNWKPHNGFLPIAIGLLIITISCTLSYNAGAAMNPSRDLAPRFFSYLAGYGTEPFGVKGYTWFFVPVLGSHCGAIIGGAIYQLFIGGQWPDDTSDTNSVSSMSYNEDNSTLTKRKQVSNIVHDSKGAKGSSTAPVN.

Helical transmembrane passes span 55–75 (FLAV…AIFT), 98–118 (VAGG…FAVL), and 126–146 (CIFY…TMFA). Positions 108-110 (NPA) match the NPA 1 motif. Asn-166 carries N-linked (GlcNAc...) asparagine glycosylation. A run of 2 helical transmembrane segments spans residues 184 to 204 (TAFA…LAMC) and 215 to 235 (FLPI…SYNA). The short motif at 240-242 (NPS) is the NPA 2 element. The chain crosses the membrane as a helical span at residues 266 to 286 (YTWFFVPVLGSHCGAIIGGAI). Positions 302–327 (TNSVSSMSYNEDNSTLTKRKQVSNIV) are enriched in polar residues. The interval 302 to 342 (TNSVSSMSYNEDNSTLTKRKQVSNIVHDSKGAKGSSTAPVN) is disordered. Asn-314 carries N-linked (GlcNAc...) asparagine glycosylation.

This sequence belongs to the MIP/aquaporin (TC 1.A.8) family.

It is found in the cell membrane. Functionally, aquaglyceroporin that may modulate the water content and osmolytes during anhydrobiosis. This is Aquaporin-8 from Milnesium tardigradum (Water bear).